Reading from the N-terminus, the 448-residue chain is Tubby-like F-box protein 3 (448 aa).

The F-box domain occupies 56–102; sequence ESRWASLPPELLREVIRRLEADESTWPSRRNVVCFAAVCRTWREMCK. Residues 387–403 are compositionally biased toward pro residues; it reads PSPPPAGAPTPSQPGPA. A disordered region spans residues 387–406; it reads PSPPPAGAPTPSQPGPADPE.

Belongs to the TUB family. As to expression, expressed in roots, leaves, flowers and seeds.

The sequence is that of Tubby-like F-box protein 3 (TULP3) from Oryza sativa subsp. japonica (Rice).